The following is a 198-amino-acid chain: T-cell surface glycoprotein CD3 epsilon chain (198 aa).

Residues 1-21 (MRAGTLWRVLALWLLSVAAWG) form the signal peptide. At 22–120 (QEDDDHADDY…EACMEVDLTT (99 aa)) the chain is on the extracellular side. An Ig-like domain is found at 28-106 (ADDYTQKLFT…KENEHILYLK (79 aa)). Cysteine 49 and cysteine 90 are joined by a disulfide. Residues 121-141 (VASIVVADVCVTLGLLLLVYY) form a helical membrane-spanning segment. Residues 142 to 198 (WSKNRKAKCKPVTRGAGAGGRPRGQNKERPPPVPNPDYEPIRKGQRDLYSGLNQRGI) lie on the Cytoplasmic side of the membrane. Residues 153–198 (VTRGAGAGGRPRGQNKERPPPVPNPDYEPIRKGQRDLYSGLNQRGI) form a disordered region. The tract at residues 166–183 (QNKERPPPVPNPDYEPIR) is NUMB-binding region. Positions 169–196 (ERPPPVPNPDYEPIRKGQRDLYSGLNQR) constitute an ITAM domain. The interval 170–177 (RPPPVPNP) is proline-rich sequence. A phosphotyrosine mark is found at tyrosine 179 and tyrosine 190.

The TCR-CD3 complex is composed of a CD3D/CD3E and a CD3G/CD3E heterodimers that preferentially associate with TCRalpha and TCRbeta, respectively, to form TCRalpha/CD3E/CD3G and TCRbeta/CD3G/CD3E trimers. In turn, the hexamer interacts with CD3Z homodimer to form the TCR-CD3 complex. Alternatively, TCRalpha and TCRbeta can be replaced by TCRgamma and TCRdelta. Interacts with CD6. Interacts (via Proline-rich sequence) with NCK1; the interaction is ligand dependent but independent of tyrosine kinase activation. Phosphorylated on Tyr residues after T-cell receptor triggering by LCK in association with CD4/CD8.

Its subcellular location is the cell membrane. In terms of biological role, part of the TCR-CD3 complex present on T-lymphocyte cell surface that plays an essential role in adaptive immune response. When antigen presenting cells (APCs) activate T-cell receptor (TCR), TCR-mediated signals are transmitted across the cell membrane by the CD3 chains CD3D, CD3E, CD3G and CD3Z. All CD3 chains contain immunoreceptor tyrosine-based activation motifs (ITAMs) in their cytoplasmic domain. Upon TCR engagement, these motifs become phosphorylated by Src family protein tyrosine kinases LCK and FYN, resulting in the activation of downstream signaling pathways. In addition of this role of signal transduction in T-cell activation, CD3E plays an essential role in correct T-cell development. Also participates in internalization and cell surface down-regulation of TCR-CD3 complexes via endocytosis sequences present in CD3E cytosolic region. In addition to its role as a TCR coreceptor, it serves as a receptor for ITPRIPL1. Ligand recognition inhibits T-cell activation by promoting interaction with NCK1, which prevents CD3E-ZAP70 interaction and blocks the ERK-NFkB signaling cascade and calcium influx. This is T-cell surface glycoprotein CD3 epsilon chain (CD3E) from Oryctolagus cuniculus (Rabbit).